A 383-amino-acid polypeptide reads, in one-letter code: 4-hydroxy-3-methylbut-2-en-1-yl diphosphate synthase (flavodoxin) (383 aa).

Residues Cys275, Cys278, Cys310, and Glu317 each contribute to the [4Fe-4S] cluster site.

This sequence belongs to the IspG family. The cofactor is [4Fe-4S] cluster.

It carries out the reaction (2E)-4-hydroxy-3-methylbut-2-enyl diphosphate + oxidized [flavodoxin] + H2O + 2 H(+) = 2-C-methyl-D-erythritol 2,4-cyclic diphosphate + reduced [flavodoxin]. It participates in isoprenoid biosynthesis; isopentenyl diphosphate biosynthesis via DXP pathway; isopentenyl diphosphate from 1-deoxy-D-xylulose 5-phosphate: step 5/6. Converts 2C-methyl-D-erythritol 2,4-cyclodiphosphate (ME-2,4cPP) into 1-hydroxy-2-methyl-2-(E)-butenyl 4-diphosphate. In Dinoroseobacter shibae (strain DSM 16493 / NCIMB 14021 / DFL 12), this protein is 4-hydroxy-3-methylbut-2-en-1-yl diphosphate synthase (flavodoxin).